We begin with the raw amino-acid sequence, 359 residues long: Putative gluconeogenesis factor (359 aa).

Residues Val-317–Arg-359 form a disordered region.

The protein belongs to the gluconeogenesis factor family.

It localises to the cytoplasm. Its function is as follows. Required for morphogenesis under gluconeogenic growth conditions. In Mycobacterium leprae (strain TN), this protein is Putative gluconeogenesis factor.